The primary structure comprises 243 residues: Lectin-4 (243 aa).

Q1 bears the Pyrrolidone carboxylic acid mark. Residue N5 is glycosylated (N-linked (GlcNAc...) asparagine; in alpha chain). N18 carries N-linked (GlcNAc...) asparagine glycosylation. Mn(2+)-binding residues include E129 and D131. Residues D131, W133, N135, and D140 each contribute to the Ca(2+) site. D140 and H145 together coordinate Mn(2+).

Belongs to the leguminous lectin family. As to quaternary structure, homodimer of Alpha and Beta forms. N-glycosylation of Asn-5 converts form Beta to form Alpha.

Lectin which has a strong affinity for both the Lewis b and y human blood-group determinants. The protein is Lectin-4 of Griffonia simplicifolia (Bandeiraea simplicifolia).